The following is a 767-amino-acid chain: Transferrin receptor protein 1 (767 aa).

The Cytoplasmic portion of the chain corresponds to 1-67 (MDQARSAFSN…LTKPKRFNGS (67 aa)). A phosphoserine mark is found at Ser-9 and Ser-18. The residue at position 19 (Tyr-19) is a Phosphotyrosine. Residues 19–22 (YTRF) carry the Endocytosis signal motif. Thr-20 is modified (phosphothreonine). The residue at position 23 (Ser-23) is a Phosphoserine. Residues 60–63 (KPKR) carry the Stop-transfer sequence motif. The chain crosses the membrane as a helical; Signal-anchor for type II membrane protein span at residues 68–88 (FCYAVIAVIIFFLIGFMIGYL). Cys-69 carries the S-palmitoyl cysteine lipid modification. At 89–767 (GYCKRVEPKS…GDIWDIDNEF (679 aa)) the chain is on the extracellular side. Positions 96 to 110 (PKSECGRSGDSKEIE) are enriched in basic and acidic residues. Positions 96–122 (PKSECGRSGDSKEIEGTEPPETEEYFP) are disordered. Residues 111 to 121 (GTEPPETEEYF) show a composition bias toward acidic residues. Asn-211, Asn-258, and Asn-324 each carry an N-linked (GlcNAc...) asparagine glycan. Residues 230–320 (SKATTVTGKL…GTGDPYTPGF (91 aa)) form the PA domain. The segment at 576–767 (TMDTYEVLSQ…GDIWDIDNEF (192 aa)) is ligand-binding. The short motif at 653-655 (RGD) is the Cell attachment site element. N-linked (GlcNAc...) asparagine glycosylation is present at Asn-734.

It belongs to the peptidase M28 family. M28B subfamily. As to quaternary structure, homodimer; disulfide-linked. Binds one transferrin or HFE molecule per subunit. Interacts with SH3BP4. Interacts with STEAP3; facilitates TFRC endocytosis in erythroid precursor cells. In terms of processing, stearoylated by ZDHHC6 which inhibits TFRC-mediated activation of the JNK pathway and promotes mitochondrial fragmentation. Stearoylation does not affect iron uptake.

The protein resides in the cell membrane. It is found in the melanosome. Cellular uptake of iron occurs via receptor-mediated endocytosis of ligand-occupied transferrin receptor into specialized endosomes. Endosomal acidification leads to iron release. The apotransferrin-receptor complex is then recycled to the cell surface with a return to neutral pH and the concomitant loss of affinity of apotransferrin for its receptor. Transferrin receptor is necessary for development of erythrocytes and the nervous system. Positively regulates T and B cell proliferation through iron uptake. Acts as a lipid sensor that regulates mitochondrial fusion by regulating activation of the JNK pathway. When dietary levels of stearate (C18:0) are low, promotes activation of the JNK pathway, resulting in HUWE1-mediated ubiquitination and subsequent degradation of the mitofusin MFN2 and inhibition of mitochondrial fusion. When dietary levels of stearate (C18:0) are high, TFRC stearoylation inhibits activation of the JNK pathway and thus degradation of the mitofusin MFN2. Mediates uptake of NICOL1 into fibroblasts where it may regulate extracellular matrix production. The polypeptide is Transferrin receptor protein 1 (TFRC) (Equus caballus (Horse)).